Reading from the N-terminus, the 202-residue chain is MSRYRGPRLKIIRRLGELPGLTRKTPKLKPDYINKSTPNKKVSQYCIRLEEKQKLRFHHGLAEQQLLKYVRIARRAKGSTGQVLLQLLEMRLDNIIFRLGMAPTIPGARQLVNHKHILVNNRAINVPSYRCKPKDIITTRDRPESRARITKNYEFSQTYKIPNHLTLHSLQSVGLVNKIVDRESIDLNINELLVVEYYSRKA.

The S4 RNA-binding domain maps to 90–159 (MRLDNIIFRL…TKNYEFSQTY (70 aa)).

Belongs to the universal ribosomal protein uS4 family. In terms of assembly, part of the 30S ribosomal subunit. Contacts protein S5. The interaction surface between S4 and S5 is involved in control of translational fidelity.

It is found in the plastid. It localises to the chloroplast. One of the primary rRNA binding proteins, it binds directly to 16S rRNA where it nucleates assembly of the body of the 30S subunit. In terms of biological role, with S5 and S12 plays an important role in translational accuracy. In Huperzia lucidula (Shining clubmoss), this protein is Small ribosomal subunit protein uS4c (rps4).